The chain runs to 192 residues: Calcium-binding protein K (192 aa).

2 consecutive EF-hand domains span residues 60-95 and 96-131; these read WDEA…MAKA and PTLD…VVCC. Ca(2+)-binding residues include Asp73, Asp75, Asn77, Glu84, Asp109, Asp111, Ser113, Tyr115, and Glu120.

Belongs to the recoverin family.

This Dictyostelium discoideum (Social amoeba) protein is Calcium-binding protein K (cbpK).